The following is a 344-amino-acid chain: N-acetyl-gamma-glutamyl-phosphate reductase (344 aa).

Residue Cys-150 is part of the active site.

This sequence belongs to the NAGSA dehydrogenase family. Type 1 subfamily.

It is found in the cytoplasm. The catalysed reaction is N-acetyl-L-glutamate 5-semialdehyde + phosphate + NADP(+) = N-acetyl-L-glutamyl 5-phosphate + NADPH + H(+). The protein operates within amino-acid biosynthesis; L-arginine biosynthesis; N(2)-acetyl-L-ornithine from L-glutamate: step 3/4. In terms of biological role, catalyzes the NADPH-dependent reduction of N-acetyl-5-glutamyl phosphate to yield N-acetyl-L-glutamate 5-semialdehyde. The sequence is that of N-acetyl-gamma-glutamyl-phosphate reductase from Pseudomonas syringae pv. syringae (strain B728a).